A 111-amino-acid polypeptide reads, in one-letter code: Iron-sulfur cluster insertion protein ErpA (111 aa).

Iron-sulfur cluster is bound by residues cysteine 39, cysteine 103, and cysteine 105.

It belongs to the HesB/IscA family. As to quaternary structure, homodimer. Iron-sulfur cluster is required as a cofactor.

Its function is as follows. Required for insertion of 4Fe-4S clusters for at least IspG. The polypeptide is Iron-sulfur cluster insertion protein ErpA (Acinetobacter baumannii (strain AB307-0294)).